A 190-amino-acid chain; its full sequence is Nuclear transcription factor Y subunit A-7 (190 aa).

The segment at 1–33 is disordered; that stretch reads MTSSIHELSDNIGSHEKQEQRDSHFQPPIPSAR. The segment covering 7–24 has biased composition (basic and acidic residues); the sequence is ELSDNIGSHEKQEQRDSH. A Subunit association domain (SAD) motif is present at residues 103–126; that stretch reads FVNAKQYHGILRRRQSRARLESQN. A DNA-binding region (NFYA/HAP2-type) is located at residues 133–158; it reads KPYLHESRHLHAIRRPRGCGGRFLNA. The interval 147–190 is disordered; that stretch reads RPRGCGGRFLNAKKEDEHHEDSSHEEKSNLSAGKSAMAASSGTS. Residues 158–174 are compositionally biased toward basic and acidic residues; the sequence is AKKEDEHHEDSSHEEKS. Over residues 177–190 the composition is skewed to low complexity; the sequence is SAGKSAMAASSGTS.

It belongs to the NFYA/HAP2 subunit family. In terms of assembly, heterotrimeric transcription factor composed of three components, NF-YA, NF-YB and NF-YC. NF-YB and NF-YC must interact and dimerize for NF-YA association and DNA binding.

The protein localises to the nucleus. Its function is as follows. Stimulates the transcription of various genes by recognizing and binding to a CCAAT motif in promoters. This Arabidopsis thaliana (Mouse-ear cress) protein is Nuclear transcription factor Y subunit A-7 (NFYA7).